A 55-amino-acid chain; its full sequence is Large ribosomal subunit protein bL33m (55 aa).

This sequence belongs to the bacterial ribosomal protein bL33 family. Component of the mitochondrial large ribosomal subunit (mt-LSU). Mature yeast 74S mitochondrial ribosomes consist of a small (37S) and a large (54S) subunit. The 37S small subunit contains a 15S ribosomal RNA (15S mt-rRNA) and at least 32 different proteins. The 54S large subunit contains a 21S rRNA (21S mt-rRNA) and at least 45 different proteins. bL33m stabilizes the tRNA acceptor stem in the E-site.

It is found in the mitochondrion. Component of the mitochondrial ribosome (mitoribosome), a dedicated translation machinery responsible for the synthesis of mitochondrial genome-encoded proteins, including at least some of the essential transmembrane subunits of the mitochondrial respiratory chain. The mitoribosomes are attached to the mitochondrial inner membrane and translation products are cotranslationally integrated into the membrane. The protein is Large ribosomal subunit protein bL33m (mrpl39) of Schizosaccharomyces pombe (strain 972 / ATCC 24843) (Fission yeast).